A 528-amino-acid chain; its full sequence is PH domain-containing protein DDB_G0267786 (528 aa).

In terms of domain architecture, PH spans 59-180 (SDVFSGYLVK…WIEIFKTCCR (122 aa)).

This chain is PH domain-containing protein DDB_G0267786, found in Dictyostelium discoideum (Social amoeba).